The sequence spans 357 residues: uncharacterized protein (357 aa).

Residues 27–196 enclose the PNPLA domain; it reads LVCEGGGQRG…SDAIPVKEAA (170 aa). The GXGXXG motif lies at 31–36; that stretch reads GGGQRG. Positions 59 to 63 match the GXSXG motif; that stretch reads GTSAG. The active-site Nucleophile is the Ser61. Asp183 acts as the Proton acceptor in catalysis. A DGA/G motif is present at residues 183 to 185; the sequence is DGG.

Probable lipid hydrolase. This is an uncharacterized protein from Escherichia coli (strain K12).